We begin with the raw amino-acid sequence, 410 residues long: FBD-associated F-box protein At5g38590 (410 aa).

Positions 1 to 47 (MDKINGLPDDLLVKILSYVPTDIAVSTSILSKRWEFLWMWLPNLDYT) constitute an F-box domain. An FBD domain is found at 335–385 (GWNQPSSVPECLLSSLQIFKWPQYLGRPEDRDIAVYILKNARHLKKTTILA).

In Arabidopsis thaliana (Mouse-ear cress), this protein is FBD-associated F-box protein At5g38590.